We begin with the raw amino-acid sequence, 186 residues long: Testis-expressed protein 36 (186 aa).

Positions 1-52 (MTKGRRFNPPSDKDGRWFPHIGLTQKTPESITSATSKEPQSPHLPRQAEGKL) are disordered. The segment covering 24 to 39 (TQKTPESITSATSKEP) has biased composition (polar residues).

This Homo sapiens (Human) protein is Testis-expressed protein 36 (TEX36).